The primary structure comprises 78 residues: Protein EcdD (78 aa).

Its function is as follows. Involved in the non-oxidative decarboxylation and detoxification of phenolic derivatives under anaerobic conditions, however the precise biochemical function in metabolism of phenolic acid is unknown. This chain is Protein EcdD, found in Escherichia coli O157:H7.